The sequence spans 437 residues: ATP-dependent protease ATPase subunit HslU (437 aa).

ATP contacts are provided by residues Val18, 60–65, Asp250, Glu315, and Arg387; that span reads GCGKTE.

The protein belongs to the ClpX chaperone family. HslU subfamily. In terms of assembly, a double ring-shaped homohexamer of HslV is capped on each side by a ring-shaped HslU homohexamer. The assembly of the HslU/HslV complex is dependent on binding of ATP.

It is found in the cytoplasm. In terms of biological role, ATPase subunit of a proteasome-like degradation complex; this subunit has chaperone activity. The binding of ATP and its subsequent hydrolysis by HslU are essential for unfolding of protein substrates subsequently hydrolyzed by HslV. HslU recognizes the N-terminal part of its protein substrates and unfolds these before they are guided to HslV for hydrolysis. This Methylorubrum populi (strain ATCC BAA-705 / NCIMB 13946 / BJ001) (Methylobacterium populi) protein is ATP-dependent protease ATPase subunit HslU.